The following is a 104-amino-acid chain: Large ribosomal subunit protein uL24 (104 aa).

This sequence belongs to the universal ribosomal protein uL24 family. In terms of assembly, part of the 50S ribosomal subunit.

Functionally, one of two assembly initiator proteins, it binds directly to the 5'-end of the 23S rRNA, where it nucleates assembly of the 50S subunit. One of the proteins that surrounds the polypeptide exit tunnel on the outside of the subunit. In Shigella dysenteriae serotype 1 (strain Sd197), this protein is Large ribosomal subunit protein uL24.